The primary structure comprises 664 residues: Translation factor GUF1, mitochondrial (664 aa).

The 184-residue stretch at 63 to 246 (SNYRNFSIVA…SIINNIPPPQ (184 aa)) folds into the tr-type G domain. GTP is bound by residues 72–79 (AHVDHGKS), 139–143 (DTPGH), and 193–196 (NKID).

This sequence belongs to the TRAFAC class translation factor GTPase superfamily. Classic translation factor GTPase family. LepA subfamily.

The protein localises to the mitochondrion inner membrane. The enzyme catalyses GTP + H2O = GDP + phosphate + H(+). Its function is as follows. Promotes mitochondrial protein synthesis. May act as a fidelity factor of the translation reaction, by catalyzing a one-codon backward translocation of tRNAs on improperly translocated ribosomes. Binds to mitochondrial ribosomes in a GTP-dependent manner. The sequence is that of Translation factor GUF1, mitochondrial from Clavispora lusitaniae (strain ATCC 42720) (Yeast).